A 383-amino-acid chain; its full sequence is MDGRTRMQIDFAHQPPSRVGIEWELACVDRGSGELAGVAPEILRSFPHDDAHPHVTGEFLTNTVEVVSAPHSRVGHAVDDLARLIERVVDVADPLGIDLMCAGTHPFSAWPDQDVTPDNERYATLLDRTRWWGRQMMIWGVHVHVGIDDASKALPILNALLVHLPRFQALSASSPFWSGQETGYASNRALMFQQLPTAGLPPDLTTWADYERLVGDMTHVGVIDHHSELRWDIRPAPKWGTLETRVFDGVSTLGEIASLAALVQCLVHDMSAALDRGEELPRMQPWFVRENKWRAARYGMDAIIIQDAAGDEALVGDDTRALVERLSPTADALGCEAELRGILDIVDRGASYQRQLRVAEENDGALAPVVTHLVEELRSGLGR.

This sequence belongs to the glutamate--cysteine ligase type 2 family. YbdK subfamily.

The catalysed reaction is L-cysteine + L-glutamate + ATP = gamma-L-glutamyl-L-cysteine + ADP + phosphate + H(+). Functionally, ATP-dependent carboxylate-amine ligase which exhibits weak glutamate--cysteine ligase activity. The chain is Putative glutamate--cysteine ligase 2 from Clavibacter michiganensis subsp. michiganensis (strain NCPPB 382).